The primary structure comprises 365 residues: Phospho-N-acetylmuramoyl-pentapeptide-transferase (365 aa).

9 helical membrane passes run 19 to 39 (LLILLTVVLFLLMTLFQWLLT), 47 to 67 (AVILPVSVSAIACGLLGFGVI), 91 to 111 (AGTPTMGGIFFIPVAVGVALI), 115 to 135 (FDPQVVAVGIVTLAYMMIGWV), 155 to 175 (LLLQIAVAVLFCLWMLWTGSP), 184 to 204 (GNLIIPLGWLFWILAIFVLVA), 224 to 244 (AIAFLGLAAIVAPTSVGLMIF), 281 to 301 (AVGLLSGNLWGLFIISGIFFV), and 344 to 364 (TQIVGVFYLINAGLAILGFIS).

It belongs to the glycosyltransferase 4 family. MraY subfamily. The cofactor is Mg(2+).

Its subcellular location is the cell inner membrane. The enzyme catalyses UDP-N-acetyl-alpha-D-muramoyl-L-alanyl-gamma-D-glutamyl-meso-2,6-diaminopimeloyl-D-alanyl-D-alanine + di-trans,octa-cis-undecaprenyl phosphate = di-trans,octa-cis-undecaprenyl diphospho-N-acetyl-alpha-D-muramoyl-L-alanyl-D-glutamyl-meso-2,6-diaminopimeloyl-D-alanyl-D-alanine + UMP. The protein operates within cell wall biogenesis; peptidoglycan biosynthesis. Functionally, catalyzes the initial step of the lipid cycle reactions in the biosynthesis of the cell wall peptidoglycan: transfers peptidoglycan precursor phospho-MurNAc-pentapeptide from UDP-MurNAc-pentapeptide onto the lipid carrier undecaprenyl phosphate, yielding undecaprenyl-pyrophosphoryl-MurNAc-pentapeptide, known as lipid I. The chain is Phospho-N-acetylmuramoyl-pentapeptide-transferase from Gloeothece citriformis (strain PCC 7424) (Cyanothece sp. (strain PCC 7424)).